Here is a 251-residue protein sequence, read N- to C-terminus: Small ribosomal subunit protein uS3 (251 aa).

The 71-residue stretch at 39–109 (IRNYVQARLK…EVKIDVIEVI (71 aa)) folds into the KH type-2 domain. A compositionally biased stretch (basic and acidic residues) spans 222–239 (LKKIKDRRGEQRSRGRDS). Positions 222 to 251 (LKKIKDRRGEQRSRGRDSRNRRRRKPRQTT) are disordered. The span at 240 to 251 (RNRRRRKPRQTT) shows a compositional bias: basic residues.

The protein belongs to the universal ribosomal protein uS3 family. In terms of assembly, part of the 30S ribosomal subunit. Forms a tight complex with proteins S10 and S14.

In terms of biological role, binds the lower part of the 30S subunit head. Binds mRNA in the 70S ribosome, positioning it for translation. This is Small ribosomal subunit protein uS3 from Prosthecochloris aestuarii (strain DSM 271 / SK 413).